The following is a 175-amino-acid chain: MADEELKPVPAAAEAIVPSGPTSQWLTENGFAHESLAADKNGVEIIKVEPDFLLPIATALYAYGFNYLQFQGGIDLGPGQDLVSVYHLVKVSDNADKPEEVRVKVFLPRENPVVPSVYWIWKTADWQERESYDMFGIIYEGHPNLKRILMPEDWVGWPLRKDYISPDFYELQDAY.

This sequence belongs to the complex I 30 kDa subunit family. In terms of assembly, NDH-1 can be composed of about 15 different subunits; different subcomplexes with different compositions have been identified which probably have different functions.

It is found in the cellular thylakoid membrane. The catalysed reaction is a plastoquinone + NADH + (n+1) H(+)(in) = a plastoquinol + NAD(+) + n H(+)(out). It catalyses the reaction a plastoquinone + NADPH + (n+1) H(+)(in) = a plastoquinol + NADP(+) + n H(+)(out). In terms of biological role, NDH-1 shuttles electrons from an unknown electron donor, via FMN and iron-sulfur (Fe-S) centers, to quinones in the respiratory and/or the photosynthetic chain. The immediate electron acceptor for the enzyme in this species is believed to be plastoquinone. Couples the redox reaction to proton translocation, and thus conserves the redox energy in a proton gradient. Cyanobacterial NDH-1 also plays a role in inorganic carbon-concentration. The sequence is that of NAD(P)H-quinone oxidoreductase subunit J from Trichormus variabilis (strain ATCC 29413 / PCC 7937) (Anabaena variabilis).